The sequence spans 528 residues: MGDGLTPEGKAQLITRNLQEVLGEDKMKEILKERPLRIYWGTATTGKPHVAYFVPMSKIADFLKAGCEVTILFADLHAYLDNMKAPWDLLELRTRYYEQVIQAMLQSIGVPLERLRFIRGTEFQLSKEYTLDVYRLSSVVTQHDAKKAGAEVVKQVEHPLLSGLLYPGLQALDEEYLKVDAQFGGVDQRKIFTFAEKYLPALGYAKRIHLMNPMVPGLTGAKMSSSEEESKIDLLDSPADVKKKLKKAFCEPGNIENNGVLSFVRHVLFPLKSEFVVLRDEKFGGNKTYTDFETLEKDFTEQLVHPGDLKASVEKALNKLLDPIREKFNSPEMKKLSNDAYPGASKQKTVPKGSTKNSGPEEIDPSLLDLRVGKILSVRQHPDADSLYVESVDVGEENPRCVVSGLVQYVPSDQLLGRSVVLLCNLKPQKMRGIESQGMLLCASTEGEQKQVEPLDPPTGSAPGERIYIEGYENGEPEGELKPKKKVFEKLQVDFRISDDLCAQWKGKNFLTKLGSVTCKTLRGGSIS.

L-tyrosine is bound at residue tyrosine 39. The 'HIGH' region motif lies at 44 to 52 (TTGKPHVAY). Positions 166, 170, 173, and 188 each coordinate L-tyrosine. A 'KMSKS' region motif is present at residues 222–226 (KMSSS). The short motif at 242–247 (KKKLKK) is the Nuclear localization signal element. Residues 335–364 (KLSNDAYPGASKQKTVPKGSTKNSGPEEID) form a disordered region. Over residues 346-358 (KQKTVPKGSTKNS) the composition is skewed to polar residues. Positions 364–468 (DPSLLDLRVG…TGSAPGERIY (105 aa)) constitute a tRNA-binding domain.

The protein belongs to the class-I aminoacyl-tRNA synthetase family. In terms of assembly, homodimer.

The protein resides in the cytoplasm. It localises to the nucleus. It carries out the reaction tRNA(Tyr) + L-tyrosine + ATP = L-tyrosyl-tRNA(Tyr) + AMP + diphosphate + H(+). Functionally, catalyzes the attachment of tyrosine to tRNA(Tyr) in a two-step reaction: tyrosine is first activated by ATP to form Tyr-AMP and then transferred to the acceptor end of tRNA(Tyr). This chain is Tyrosine--tRNA ligase, cytoplasmic (yars1), found in Xenopus tropicalis (Western clawed frog).